The chain runs to 235 residues: Protein YIP4 (235 aa).

5 helical membrane passes run 89–109 (ISAN…SLFV), 114–134 (SLFS…ALHL), 145–165 (LISY…NALV), 186–206 (VLSL…VAAV), and 215–235 (IIEI…STIL).

The protein belongs to the YIP1 family. Interacts with TVP18, TVP23, YIP1 and YIP5. Interacts with SEC4, YPT1, YPT6, YPT7, YPT10, YPT11, YPT31, YPT32 and YPT52; These proteins are all Rab GTPases.

The protein localises to the golgi apparatus membrane. May be involved in proper membrane localization of Rab GTPases. This chain is Protein YIP4 (YIP4), found in Saccharomyces cerevisiae (strain ATCC 204508 / S288c) (Baker's yeast).